Reading from the N-terminus, the 575-residue chain is Alpha-(1,6)-fucosyltransferase (575 aa).

The Cytoplasmic portion of the chain corresponds to 1–9 (MRAWTGSWR). The helical; Signal-anchor for type II membrane protein transmembrane segment at 10-30 (WIMLILFAWGTLLFYIGGHLV) threads the bilayer. Residues 31 to 575 (RDNDHPDHSS…KYPTYPEAEK (545 aa)) are Lumenal-facing. Disulfide bonds link C204-C266, C212-C230, and C218-C222. In terms of domain architecture, GT23 spans 206-493 (KARKLVCNIN…PDASANFHSL (288 aa)). Phosphoserine is present on S278. Positions 299-305 (PRPPYLP) match the SH3-binding motif. Residues 365–366 (RR) are important for donor substrate binding. A disulfide bridge connects residues C465 and C472. Residues 502–563 (QNAHNQIAVY…PSYKVREKIE (62 aa)) enclose the SH3 domain.

It belongs to the glycosyltransferase 23 family. Post-translationally, tyrosine phosphorylated by PKDCC/VLK.

It localises to the golgi apparatus. The protein resides in the golgi stack membrane. It catalyses the reaction N(4)-{beta-D-GlcNAc-(1-&gt;2)-alpha-D-Man-(1-&gt;3)-[beta-D-GlcNAc-(1-&gt;2)-alpha-D-Man-(1-&gt;6)]-beta-D-Man-(1-&gt;4)-beta-D-GlcNAc-(1-&gt;4)-beta-D-GlcNAc}-L-asparaginyl-[protein] + GDP-beta-L-fucose = an N(4)-{beta-D-GlcNAc-(1-&gt;2)-alpha-D-Man-(1-&gt;3)-[beta-D-GlcNAc-(1-&gt;2)-alpha-D-Man-(1-&gt;6)]-beta-D-Man-(1-&gt;4)-beta-D-GlcNAc-(1-&gt;4)-[alpha-L-Fuc-(1-&gt;6)]-beta-D-GlcNAc}-L-asparaginyl-[protein] + GDP + H(+). It functions in the pathway protein modification; protein glycosylation. Functionally, catalyzes the addition of fucose in alpha 1-6 linkage to the first GlcNAc residue, next to the peptide chains in N-glycans. The chain is Alpha-(1,6)-fucosyltransferase (Fut8) from Mus musculus (Mouse).